The sequence spans 201 residues: Recombination protein RecR (201 aa).

Residues 60-75 (CSCCGNVDTIDPCTVC) form a C4-type zinc finger. One can recognise a Toprim domain in the interval 83–178 (AVIIVVEDVA…RITRLAHGVP (96 aa)).

Belongs to the RecR family.

In terms of biological role, may play a role in DNA repair. It seems to be involved in an RecBC-independent recombinational process of DNA repair. It may act with RecF and RecO. This chain is Recombination protein RecR, found in Sinorhizobium medicae (strain WSM419) (Ensifer medicae).